Here is a 484-residue protein sequence, read N- to C-terminus: MGSNDLINEAYDDSEVVGEERESKSAWMKRWYQLLTSPLDLQLVINEKLEMINWDAYAKSLAKPLGNFLTILFFIIRLLQDNLIKPNYYKLNVKSGAFDLSKSNKLKEFDYLWEISSSFQNNNQFYAFQSWYFVTLRFLNNLFRFTIFILLSLNLYVSCKFMFGYFKTYNLFHLKKEFNSPNLTKHNLKDLSKEYYEDIYKQSLWSMLKHFFRGSRDDGPHVNQNEDEIFFQLRKWIPTNFMINLFVSFSPTAIVFLSFSDVSFTSAIAIVFHQYILDYIITKRFQRSVDDDLILSSAALQEYEDKHIMARINQCSNIDTLSSAMGTRSKTPRIFTTHSLCGEEIREVYNYEKREFEALPKMTESVPGSRETRIKDYGGISQVSDHQSHPIGFHYSPRMSPYYRDKVLDNNLAQSSSNENLEKGGAYLPNQDQNRPSKSLSPLRKTPLSARQKRFEGSEFNVLNKNDINSILRSPKKKKNYHKR.

Position 3 is a phosphoserine (Ser3). 2 helical membrane-spanning segments follow: residues Phe145–Tyr165 and Thr252–Phe272. The disordered stretch occupies residues Ser416 to Gly457. Phosphoserine is present on Ser417. A compositionally biased stretch (polar residues) spans Asn430 to Leu440. Ser474 is subject to Phosphoserine.

This sequence belongs to the NUR1 family. As to quaternary structure, interacts with CSM1.

The protein resides in the nucleus membrane. Member of a perinuclear network that controls recombination at multiple loci to maintain genome stability. Required for rDNA repeat stability. In Saccharomyces cerevisiae (strain ATCC 204508 / S288c) (Baker's yeast), this protein is Nuclear rim protein 1 (NUR1).